Here is a 249-residue protein sequence, read N- to C-terminus: Adenosylcobinamide-GDP ribazoletransferase (249 aa).

7 helical membrane-spanning segments follow: residues 29-49, 50-70, 104-124, 131-151, 165-185, 194-214, and 226-246; these read LYWFPVVGAFLGTLLAACAWL, PLSIGWSELASAVVVVGGFIV, VGSFGALALLSLMLLKWVAIL, AFALIASGVLLGRLSQVLLAA, GFVGGAGRTHAAVALALSLMM, PFLLFLLFGAALTAAALIGFL, and VLGAVSEVTELFVWLAAGVAF.

The protein belongs to the CobS family. It depends on Mg(2+) as a cofactor.

The protein resides in the cell inner membrane. It carries out the reaction alpha-ribazole + adenosylcob(III)inamide-GDP = adenosylcob(III)alamin + GMP + H(+). It catalyses the reaction alpha-ribazole 5'-phosphate + adenosylcob(III)inamide-GDP = adenosylcob(III)alamin 5'-phosphate + GMP + H(+). Its pathway is cofactor biosynthesis; adenosylcobalamin biosynthesis; adenosylcobalamin from cob(II)yrinate a,c-diamide: step 7/7. Functionally, joins adenosylcobinamide-GDP and alpha-ribazole to generate adenosylcobalamin (Ado-cobalamin). Also synthesizes adenosylcobalamin 5'-phosphate from adenosylcobinamide-GDP and alpha-ribazole 5'-phosphate. The sequence is that of Adenosylcobinamide-GDP ribazoletransferase from Chlorobium phaeovibrioides (strain DSM 265 / 1930) (Prosthecochloris vibrioformis (strain DSM 265)).